The sequence spans 209 residues: Vacuolar protein sorting-associated protein 28 homolog 1 (209 aa).

One can recognise a VPS28 N-terminal domain in the interval 1 to 99 (MEVKLWNDKR…TSGVPATVEH (99 aa)). Residues 109–205 (SSASVVAECV…SYNSFMAALP (97 aa)) form the VPS28 C-terminal domain.

It belongs to the VPS28 family. In terms of assembly, component of the endosomal sorting required for transport complex I (ESCRT-I), composed of ELC, VPS28 and VPS37. Interacts with ELC.

The protein resides in the endosome. Component of the ESCRT-I complex (endosomal sorting complex required for transport I), a regulator of vesicular trafficking process. Required for the sorting of endocytic ubiquitinated cargos into multivesicular bodies (MVBs). Mediates the association to the ESCRT-0 complex. The protein is Vacuolar protein sorting-associated protein 28 homolog 1 (VPS28-1) of Arabidopsis thaliana (Mouse-ear cress).